Here is a 364-residue protein sequence, read N- to C-terminus: Ribosomal RNA large subunit methyltransferase F (364 aa).

Residues 1–52 are disordered; sequence MPKPAIKTAAKLAMSSAGKRGKPSTPKSLAKPQTTKPKTASKLKAKHGEQKR. Over residues 25–38 the composition is skewed to polar residues; sequence TPKSLAKPQTTKPK.

This sequence belongs to the methyltransferase superfamily. METTL16/RlmF family.

Its subcellular location is the cytoplasm. The catalysed reaction is adenosine(1618) in 23S rRNA + S-adenosyl-L-methionine = N(6)-methyladenosine(1618) in 23S rRNA + S-adenosyl-L-homocysteine + H(+). Its function is as follows. Specifically methylates the adenine in position 1618 of 23S rRNA. The protein is Ribosomal RNA large subunit methyltransferase F of Shewanella sp. (strain ANA-3).